We begin with the raw amino-acid sequence, 196 residues long: DnaA initiator-associating protein DiaA (196 aa).

The SIS domain maps to 34–196 (LVQSLLNGNK…DNTLFPHQDD (163 aa)).

This sequence belongs to the SIS family. DiaA subfamily. In terms of assembly, homotetramer; dimer of dimers.

In terms of biological role, required for the timely initiation of chromosomal replication via direct interactions with the DnaA initiator protein. The chain is DnaA initiator-associating protein DiaA from Cronobacter sakazakii (strain ATCC BAA-894) (Enterobacter sakazakii).